A 349-amino-acid polypeptide reads, in one-letter code: Macrophage-capping protein (349 aa).

Residue methionine 1 is modified to N-acetylmethionine. Gelsolin-like repeat units lie at residues lysine 28–methionine 107, lysine 147–isoleucine 222, and leucine 264–lysine 342. Residues arginine 138–lysine 147 carry the Nuclear localization signal motif. Residue serine 338 is modified to Phosphoserine.

The protein belongs to the villin/gelsolin family. In terms of assembly, interacts with NUP62. Interacts with NUTF2 and RAN; involved in CAPG nuclear import. Phosphorylated.

The protein resides in the nucleus. The protein localises to the cytoplasm. Its subcellular location is the melanosome. It is found in the cell projection. It localises to the lamellipodium. The protein resides in the ruffle. Its function is as follows. Calcium-sensitive protein which reversibly blocks the barbed ends of actin filaments but does not sever preformed actin filaments. May play an important role in macrophage function. May play a role in regulating cytoplasmic and/or nuclear structures through potential interactions with actin. May bind DNA. Uncapping occurs either when Ca(2+) falls or when the concentration of polyphosphoinositide rises, both at low and high Ca(2+). The sequence is that of Macrophage-capping protein (Capg) from Rattus norvegicus (Rat).